A 279-amino-acid chain; its full sequence is 4-hydroxy-3-methylbut-2-enyl diphosphate reductase (279 aa).

Cys-12 is a binding site for [4Fe-4S] cluster. (2E)-4-hydroxy-3-methylbut-2-enyl diphosphate is bound by residues His-40 and His-70. Dimethylallyl diphosphate contacts are provided by His-40 and His-70. Residues His-40 and His-70 each coordinate isopentenyl diphosphate. Cys-92 serves as a coordination point for [4Fe-4S] cluster. A (2E)-4-hydroxy-3-methylbut-2-enyl diphosphate-binding site is contributed by His-119. His-119 contributes to the dimethylallyl diphosphate binding site. His-119 lines the isopentenyl diphosphate pocket. Catalysis depends on Glu-121, which acts as the Proton donor. A (2E)-4-hydroxy-3-methylbut-2-enyl diphosphate-binding site is contributed by Thr-151. Cys-181 is a [4Fe-4S] cluster binding site. Residues Ser-209, Ser-210, Asn-211, and Ser-251 each coordinate (2E)-4-hydroxy-3-methylbut-2-enyl diphosphate. Positions 209, 210, 211, and 251 each coordinate dimethylallyl diphosphate. The isopentenyl diphosphate site is built by Ser-209, Ser-210, Asn-211, and Ser-251.

The protein belongs to the IspH family. It depends on [4Fe-4S] cluster as a cofactor.

The enzyme catalyses isopentenyl diphosphate + 2 oxidized [2Fe-2S]-[ferredoxin] + H2O = (2E)-4-hydroxy-3-methylbut-2-enyl diphosphate + 2 reduced [2Fe-2S]-[ferredoxin] + 2 H(+). The catalysed reaction is dimethylallyl diphosphate + 2 oxidized [2Fe-2S]-[ferredoxin] + H2O = (2E)-4-hydroxy-3-methylbut-2-enyl diphosphate + 2 reduced [2Fe-2S]-[ferredoxin] + 2 H(+). It functions in the pathway isoprenoid biosynthesis; dimethylallyl diphosphate biosynthesis; dimethylallyl diphosphate from (2E)-4-hydroxy-3-methylbutenyl diphosphate: step 1/1. It participates in isoprenoid biosynthesis; isopentenyl diphosphate biosynthesis via DXP pathway; isopentenyl diphosphate from 1-deoxy-D-xylulose 5-phosphate: step 6/6. In terms of biological role, catalyzes the conversion of 1-hydroxy-2-methyl-2-(E)-butenyl 4-diphosphate (HMBPP) into a mixture of isopentenyl diphosphate (IPP) and dimethylallyl diphosphate (DMAPP). Acts in the terminal step of the DOXP/MEP pathway for isoprenoid precursor biosynthesis. In Thermotoga neapolitana (strain ATCC 49049 / DSM 4359 / NBRC 107923 / NS-E), this protein is 4-hydroxy-3-methylbut-2-enyl diphosphate reductase.